Reading from the N-terminus, the 100-residue chain is Small ribosomal subunit protein uS14c (100 aa).

The protein belongs to the universal ribosomal protein uS14 family. In terms of assembly, part of the 30S ribosomal subunit.

Its subcellular location is the plastid. It localises to the chloroplast. Functionally, binds 16S rRNA, required for the assembly of 30S particles. This chain is Small ribosomal subunit protein uS14c, found in Olimarabidopsis pumila (Dwarf rocket).